The following is a 200-amino-acid chain: Probable E3 ubiquitin-protein ligase ATL45 (200 aa).

A helical membrane pass occupies residues 26-46 (MVVILSALLCALVCVAGLAAV). The RING-type; atypical zinc-finger motif lies at 113-155 (CAICITEFSEGEEIRILPLCSHAFHVACIDKWLTSRSSCPSCR).

This sequence belongs to the RING-type zinc finger family. ATL subfamily. In terms of assembly, interacts with BIK1.

It is found in the membrane. The catalysed reaction is S-ubiquitinyl-[E2 ubiquitin-conjugating enzyme]-L-cysteine + [acceptor protein]-L-lysine = [E2 ubiquitin-conjugating enzyme]-L-cysteine + N(6)-ubiquitinyl-[acceptor protein]-L-lysine.. Its pathway is protein modification; protein ubiquitination. Functionally, E3 ubiquitin-protein ligase that possess E3 ubiquitin ligase activity in vitro and mediates protein monoubiquitination. Triggers the monoubiquitination of phosphorylated BIK1 in response to pathogen-associated molecular pattern (PAMP) detection. May be involved in the early steps of the plant defense signaling pathway. This is Probable E3 ubiquitin-protein ligase ATL45 from Arabidopsis thaliana (Mouse-ear cress).